Reading from the N-terminus, the 307-residue chain is Transaldolase (307 aa).

Lys-125 serves as the catalytic Schiff-base intermediate with substrate.

The protein belongs to the transaldolase family. Type 1 subfamily.

Its subcellular location is the cytoplasm. The catalysed reaction is D-sedoheptulose 7-phosphate + D-glyceraldehyde 3-phosphate = D-erythrose 4-phosphate + beta-D-fructose 6-phosphate. The protein operates within carbohydrate degradation; pentose phosphate pathway; D-glyceraldehyde 3-phosphate and beta-D-fructose 6-phosphate from D-ribose 5-phosphate and D-xylulose 5-phosphate (non-oxidative stage): step 2/3. In terms of biological role, transaldolase is important for the balance of metabolites in the pentose-phosphate pathway. This Pseudomonas aeruginosa (strain ATCC 15692 / DSM 22644 / CIP 104116 / JCM 14847 / LMG 12228 / 1C / PRS 101 / PAO1) protein is Transaldolase.